The primary structure comprises 155 residues: Small ribosomal subunit protein uS7cz/uS7cy (155 aa).

The protein belongs to the universal ribosomal protein uS7 family. As to quaternary structure, part of the 30S ribosomal subunit.

The protein resides in the plastid. Its subcellular location is the chloroplast. Functionally, one of the primary rRNA binding proteins, it binds directly to 16S rRNA where it nucleates assembly of the head domain of the 30S subunit. This chain is Small ribosomal subunit protein uS7cz/uS7cy (rps7-A), found in Nandina domestica (Heavenly bamboo).